The primary structure comprises 652 residues: Acetyl-coenzyme A synthetase (652 aa).

Residues 191–194, T311, and N335 contribute to the CoA site; that span reads RAGR. Residues 387-389, 411-416, D500, and R515 contribute to the ATP site; these read GEP and DTWWQT. S523 is a binding site for CoA. R526 serves as a coordination point for ATP. V537, H539, and I542 together coordinate Mg(2+). Position 584 (R584) interacts with CoA. N6-acetyllysine; by autocatalysis is present on K609.

This sequence belongs to the ATP-dependent AMP-binding enzyme family. As to quaternary structure, forms a 1:1 complex with CobB/NAD-dependent deacetylase. The cofactor is Mg(2+). In terms of processing, autoacetylated. Deacetylation by CobB activates the enzyme.

It catalyses the reaction acetate + ATP + CoA = acetyl-CoA + AMP + diphosphate. Catalyzes the conversion of acetate into acetyl-CoA (AcCoA), an essential intermediate at the junction of anabolic and catabolic pathways. Acs undergoes a two-step reaction. In the first half reaction, Acs combines acetate with ATP to form acetyl-adenylate (AcAMP) intermediate. In the second half reaction, it can then transfer the acetyl group from AcAMP to the sulfhydryl group of CoA, forming the product AcCoA. In terms of biological role, enables the cell to use acetate during aerobic growth to generate energy via the TCA cycle, and biosynthetic compounds via the glyoxylate shunt. Acetylates CheY, the response regulator involved in flagellar movement and chemotaxis. This Escherichia coli (strain K12) protein is Acetyl-coenzyme A synthetase.